Consider the following 338-residue polypeptide: Phenylalanine--tRNA ligase alpha subunit (338 aa).

Position 253 (glutamate 253) interacts with Mg(2+).

Belongs to the class-II aminoacyl-tRNA synthetase family. Phe-tRNA synthetase alpha subunit type 1 subfamily. As to quaternary structure, tetramer of two alpha and two beta subunits. It depends on Mg(2+) as a cofactor.

Its subcellular location is the cytoplasm. The enzyme catalyses tRNA(Phe) + L-phenylalanine + ATP = L-phenylalanyl-tRNA(Phe) + AMP + diphosphate + H(+). The chain is Phenylalanine--tRNA ligase alpha subunit from Pelobacter propionicus (strain DSM 2379 / NBRC 103807 / OttBd1).